The chain runs to 720 residues: Catalase-peroxidase (720 aa).

The tryptophyl-tyrosyl-methioninium (Trp-Tyr) (with M-233) cross-link spans 82–207 (WHSAGTYRTF…LGNTVMGLIY (126 aa)). Histidine 83 (proton acceptor) is an active-site residue. Residues 207 to 233 (YVNPEGPNGEPDLEGSAKNIRESFGKM) constitute a cross-link (tryptophyl-tyrosyl-methioninium (Tyr-Met) (with W-82)). Histidine 248 lines the heme b pocket.

The protein belongs to the peroxidase family. Peroxidase/catalase subfamily. In terms of assembly, homodimer or homotetramer. Requires heme b as cofactor. Post-translationally, formation of the three residue Trp-Tyr-Met cross-link is important for the catalase, but not the peroxidase activity of the enzyme.

The enzyme catalyses H2O2 + AH2 = A + 2 H2O. The catalysed reaction is 2 H2O2 = O2 + 2 H2O. Its function is as follows. Bifunctional enzyme with both catalase and broad-spectrum peroxidase activity. In Halobacterium salinarum (strain ATCC 29341 / DSM 671 / R1), this protein is Catalase-peroxidase.